We begin with the raw amino-acid sequence, 410 residues long: Sprouty-related, EVH1 domain-containing protein 2 (410 aa).

One can recognise a WH1 domain in the interval 5–122 (THPDDDSYIV…RGVRKAIEDL (118 aa)). The disordered stretch occupies residues 127 to 171 (TTSSSTLHNEAELGDDDVFTTATDSSSNSSQKREPTTRTISSPTS). Positions 146–156 (TTATDSSSNSS) are enriched in polar residues. The 56-residue stretch at 197–252 (SYPQVTFPEDDEEIVRINPREKIWMTGYEDYRHAPVRGKYLDTTEDADSYVRFAKG) folds into the KBD domain. Residues tyrosine 224 and tyrosine 227 each carry the phosphotyrosine modification. A disordered region spans residues 274–294 (DPKGSVIKTQPPRAKSRRRKE). The SPR domain occupies 300-408 (RCVYCRDMFN…CRCCGGKHKA (109 aa)).

As to quaternary structure, homodimer and heterodimer. Able to interact with SPRED1 to form heterodimers. Interacts with RAS. May interact with ZDHHC13 (via ANK repeats) and ZDHHC17 (via ANK repeats). Interacts with TESK1. Interacts with NF1. Phosphorylated on serine and threonine residues. Phosphorylated on tyrosine. Phosphorylation of Tyr-224 and Tyr-227 are required for ubiquitination. In terms of processing, ubiquitinated; leading to degradation by the proteasome. As to expression, predominantly expressed in lung, liver and testis. In testis, it is specially found in mature spermatids projecting into the lumen of the seminiferous. Strongly expressed in glandular epithelia. Also expressed in embryonic tissues such as heart, lung, liver and brain.

It is found in the cell membrane. The protein localises to the cytoplasmic vesicle. Its subcellular location is the secretory vesicle membrane. The protein resides in the cytoplasm. In terms of biological role, negatively regulates Ras signaling pathways and downstream activation of MAP kinases. Recruits and translocates NF1 to the cell membrane, thereby enabling NF1-dependent hydrolysis of active GTP-bound Ras to inactive GDP-bound Ras. Inhibits fibroblast growth factor (FGF)-induced retinal lens fiber differentiation, probably by inhibiting FGF-mediated phosphorylation of ERK1/2. Inhibits TGFB-induced epithelial-to-mesenchymal transition in lens epithelial cells. The protein is Sprouty-related, EVH1 domain-containing protein 2 (Spred2) of Mus musculus (Mouse).